The chain runs to 442 residues: tRNA-2-methylthio-N(6)-dimethylallyladenosine synthase (442 aa).

In terms of domain architecture, MTTase N-terminal spans 5–122; the sequence is KKVFIKTLGC…LPEMIKQKQK (118 aa). Residues cysteine 14, cysteine 51, cysteine 85, cysteine 159, cysteine 163, and cysteine 166 each coordinate [4Fe-4S] cluster. Residues 145–378 enclose the Radical SAM core domain; sequence KAEGAKAYVS…DLLNSNAQII (234 aa). The TRAM domain maps to 380 to 442; sequence RQMVGTNQRI…LPNSLRGELI (63 aa).

This sequence belongs to the methylthiotransferase family. MiaB subfamily. Monomer. [4Fe-4S] cluster is required as a cofactor.

It localises to the cytoplasm. It catalyses the reaction N(6)-dimethylallyladenosine(37) in tRNA + (sulfur carrier)-SH + AH2 + 2 S-adenosyl-L-methionine = 2-methylsulfanyl-N(6)-dimethylallyladenosine(37) in tRNA + (sulfur carrier)-H + 5'-deoxyadenosine + L-methionine + A + S-adenosyl-L-homocysteine + 2 H(+). In terms of biological role, catalyzes the methylthiolation of N6-(dimethylallyl)adenosine (i(6)A), leading to the formation of 2-methylthio-N6-(dimethylallyl)adenosine (ms(2)i(6)A) at position 37 in tRNAs that read codons beginning with uridine. The sequence is that of tRNA-2-methylthio-N(6)-dimethylallyladenosine synthase from Francisella tularensis subsp. holarctica (strain FTNF002-00 / FTA).